We begin with the raw amino-acid sequence, 202 residues long: Guanylate kinase (202 aa).

In terms of domain architecture, Guanylate kinase-like spans 18–200 (LKPVVVFGPS…AYKQLEAICL (183 aa)). 25–32 (GPSGVGKS) contributes to the ATP binding site.

It belongs to the guanylate kinase family.

The enzyme catalyses GMP + ATP = GDP + ADP. Functionally, essential for recycling GMP and indirectly, cGMP. This is Guanylate kinase from Schizosaccharomyces pombe (strain 972 / ATCC 24843) (Fission yeast).